Reading from the N-terminus, the 2635-residue chain is Protein unc-79 homolog (2635 aa).

Phosphoserine is present on residues serine 754 and serine 758. Disordered regions lie at residues 907-929 (GPEG…NCTE), 1538-1575 (IAQR…DARR), 1607-1678 (LIDL…SVLS), 1693-1832 (SKDF…FKIQ), 1863-1909 (LGEQ…TQYR), and 1929-1950 (LEHQ…IQPG). Low complexity predominate over residues 1666–1678 (SSPSVPSHPSVLS). Polar residues predominate over residues 1699 to 1713 (KDSGNNQSAGNTDSA). Over residues 1761-1775 (LDDHPDPGTEGEKPG) the composition is skewed to basic and acidic residues. Composition is skewed to polar residues over residues 1897-1909 (ETSS…TQYR) and 1929-1947 (LEHQ…TEQI). A run of 2 helical transmembrane segments spans residues 2223–2243 (LLSF…ELCG) and 2466–2486 (VLHM…TVYC).

This sequence belongs to the unc-79 family. In terms of assembly, NALCN complex consists of NALCN and auxiliary subunits, UNC79, UNC80 and NACL1. These auxiliary subunits are essential for the NALCN channel function. UNC80 bridges NALCN to UNC79.

Its subcellular location is the cell membrane. Auxiliary subunit of the NALCN sodium channel complex, a voltage-gated ion channel responsible for the resting Na(+) permeability that controls neuronal excitability. Activated by neuropeptides substance P, neurotensin, and extracellular calcium that regulates neuronal excitability by controlling the sizes of NALCN-dependent sodium-leak current. The polypeptide is Protein unc-79 homolog (UNC79) (Homo sapiens (Human)).